A 250-amino-acid polypeptide reads, in one-letter code: Triosephosphate isomerase (250 aa).

9–11 is a substrate binding site; sequence NWK. Catalysis depends on His95, which acts as the Electrophile. Glu167 (proton acceptor) is an active-site residue. Substrate is bound by residues Gly173, Ser213, and 234–235; that span reads GG.

The protein belongs to the triosephosphate isomerase family. In terms of assembly, homodimer.

Its subcellular location is the cytoplasm. It catalyses the reaction D-glyceraldehyde 3-phosphate = dihydroxyacetone phosphate. Its pathway is carbohydrate biosynthesis; gluconeogenesis. The protein operates within carbohydrate degradation; glycolysis; D-glyceraldehyde 3-phosphate from glycerone phosphate: step 1/1. In terms of biological role, involved in the gluconeogenesis. Catalyzes stereospecifically the conversion of dihydroxyacetone phosphate (DHAP) to D-glyceraldehyde-3-phosphate (G3P). This Flavobacterium johnsoniae (strain ATCC 17061 / DSM 2064 / JCM 8514 / BCRC 14874 / CCUG 350202 / NBRC 14942 / NCIMB 11054 / UW101) (Cytophaga johnsonae) protein is Triosephosphate isomerase.